A 232-amino-acid chain; its full sequence is Histone H1A (232 aa).

Low complexity predominate over residues 1 to 18 (MSDPAVEVTPAVPVASPA). Disordered stretches follow at residues 1 to 42 (MSDP…THLP) and 98 to 232 (LQTK…AKKA). Residues 39-113 (THLPVSDMVV…GASGSFKLPA (75 aa)) form the H15 domain. 4 stretches are compositionally biased toward basic residues: residues 131 to 141 (KPKKAAAPKPK), 147 to 173 (KVKKTIAKKPKAATATKIKKPVAKTTK), 181 to 214 (AAKKAAPKPKAAPKPKAAKKETKPKKAAAPKAKK), and 222 to 232 (KAAKKPAAKKA).

It belongs to the histone H1/H5 family.

The protein localises to the nucleus. It localises to the chromosome. Functionally, histones H1 are necessary for the condensation of nucleosome chains into higher-order structures. The chain is Histone H1A from Chironomus tentans (Midge).